We begin with the raw amino-acid sequence, 351 residues long: MNVKEHVISLPRRVFVGHDIIYDISIYFSQLGITSPFLIVTGTKYTKKIADRVIENLPKNAKYEVIEIDTATLDDVYKVEEVVKKVNPNILLGIGGGKVIDVTKYAAFRNNLEFVSIPTSPSHDGITSPFASIKGLQKPVSVKAKEPLAIIADIEILSLSPRRLINAGIGDTIGKIIAVRDWRLAAKLRGEYYGDYTASLALMSAKHAFQCTKIINKDIKYGVRMLIEALISSGVAMGMAGSTRPASGSEHLFAHAVELLHPEGVLHGELVGLGTIIMAYLHGINWKIIRDRLKKIGFPVKAKDLGLSDEEVIKALTIAHTIRPERYTILGDRGLTWSSAEKIARVTKIID.

NAD(+) contacts are provided by residues 97–101 and 119–122; these read GKVID and TSPS. Residue Asp124 coordinates substrate. Ser128 is an NAD(+) binding site. Asp171 serves as a coordination point for substrate. Zn(2+) is bound by residues Asp171 and His251. A substrate-binding site is contributed by His255. His267 is a binding site for Zn(2+).

The protein belongs to the glycerol-1-phosphate dehydrogenase family. As to quaternary structure, homodimer. It depends on Zn(2+) as a cofactor.

It localises to the cytoplasm. The enzyme catalyses sn-glycerol 1-phosphate + NAD(+) = dihydroxyacetone phosphate + NADH + H(+). It catalyses the reaction sn-glycerol 1-phosphate + NADP(+) = dihydroxyacetone phosphate + NADPH + H(+). Its pathway is membrane lipid metabolism; glycerophospholipid metabolism. In terms of biological role, catalyzes the NAD(P)H-dependent reduction of dihydroxyacetonephosphate (DHAP or glycerone phosphate) to glycerol 1-phosphate (G1P). The G1P thus generated is used as the glycerophosphate backbone of phospholipids in the cellular membranes of Archaea. This Saccharolobus islandicus (strain Y.N.15.51 / Yellowstone #2) (Sulfolobus islandicus) protein is Glycerol-1-phosphate dehydrogenase [NAD(P)+].